The following is a 284-amino-acid chain: Diaminopimelate epimerase (284 aa).

Substrate-binding residues include N14 and N67. The active-site Proton donor is C76. Substrate contacts are provided by residues 77-78, N166, N199, and 217-218; these read GN and ER. Residue C226 is the Proton acceptor of the active site. Residue 227–228 participates in substrate binding; sequence GT.

The protein belongs to the diaminopimelate epimerase family. Homodimer.

It localises to the cytoplasm. It catalyses the reaction (2S,6S)-2,6-diaminopimelate = meso-2,6-diaminopimelate. It participates in amino-acid biosynthesis; L-lysine biosynthesis via DAP pathway; DL-2,6-diaminopimelate from LL-2,6-diaminopimelate: step 1/1. Functionally, catalyzes the stereoinversion of LL-2,6-diaminopimelate (L,L-DAP) to meso-diaminopimelate (meso-DAP), a precursor of L-lysine and an essential component of the bacterial peptidoglycan. The polypeptide is Diaminopimelate epimerase (Bacillus velezensis (strain DSM 23117 / BGSC 10A6 / LMG 26770 / FZB42) (Bacillus amyloliquefaciens subsp. plantarum)).